A 348-amino-acid chain; its full sequence is Large ribosomal subunit protein uL3m (348 aa).

Residues 1–40 (MPGWRLLAQAGARVLGCGARGLGADPGLERRKNILFFVRN) constitute a mitochondrion transit peptide.

The protein belongs to the universal ribosomal protein uL3 family. In terms of assembly, component of the mitochondrial ribosome large subunit (39S) which comprises a 16S rRNA and about 50 distinct proteins.

Its subcellular location is the mitochondrion. This chain is Large ribosomal subunit protein uL3m (Mrpl3), found in Mus musculus (Mouse).